The following is a 201-amino-acid chain: MTEPVIKMPKKSVKERQQQVLEVLIGLLNSEEGMQRVTTERLSKAVGVSEGALYRYFPSKTKMFEALIERIEMTLTSYINASKRQENTELAVKAILQTILEFAQKNPGVTRILTGHALMFEDELLKARVAKFFEGLELQFMNLLQMRKLREGRAFADERALAGYLVNFCEGQFLRLVRSNFGFNQHQHFEKQWQLIKPLFY.

The HTH tetR-type domain maps to 14-75 (KERQQQVLEV…ALIERIEMTL (62 aa)). The segment at residues 38 to 57 (TTERLSKAVGVSEGALYRYF) is a DNA-binding region (H-T-H motif).

It belongs to the nucleoid occlusion factor SlmA family. As to quaternary structure, homodimer. Interacts with FtsZ.

The protein localises to the cytoplasm. Its subcellular location is the nucleoid. Functionally, required for nucleoid occlusion (NO) phenomenon, which prevents Z-ring formation and cell division over the nucleoid. Acts as a DNA-associated cell division inhibitor that binds simultaneously chromosomal DNA and FtsZ, and disrupts the assembly of FtsZ polymers. SlmA-DNA-binding sequences (SBS) are dispersed on non-Ter regions of the chromosome, preventing FtsZ polymerization at these regions. The polypeptide is Nucleoid occlusion factor SlmA (Glaesserella parasuis serovar 5 (strain SH0165) (Haemophilus parasuis)).